The sequence spans 580 residues: 2-succinyl-5-enolpyruvyl-6-hydroxy-3-cyclohexene-1-carboxylate synthase (580 aa).

This sequence belongs to the TPP enzyme family. MenD subfamily. In terms of assembly, homodimer. Mg(2+) serves as cofactor. Requires Mn(2+) as cofactor. It depends on thiamine diphosphate as a cofactor.

The catalysed reaction is isochorismate + 2-oxoglutarate + H(+) = 5-enolpyruvoyl-6-hydroxy-2-succinyl-cyclohex-3-ene-1-carboxylate + CO2. The protein operates within quinol/quinone metabolism; 1,4-dihydroxy-2-naphthoate biosynthesis; 1,4-dihydroxy-2-naphthoate from chorismate: step 2/7. Its pathway is quinol/quinone metabolism; menaquinone biosynthesis. Functionally, catalyzes the thiamine diphosphate-dependent decarboxylation of 2-oxoglutarate and the subsequent addition of the resulting succinic semialdehyde-thiamine pyrophosphate anion to isochorismate to yield 2-succinyl-5-enolpyruvyl-6-hydroxy-3-cyclohexene-1-carboxylate (SEPHCHC). This chain is 2-succinyl-5-enolpyruvyl-6-hydroxy-3-cyclohexene-1-carboxylate synthase, found in Listeria monocytogenes serovar 1/2a (strain ATCC BAA-679 / EGD-e).